The primary structure comprises 163 residues: Large ribosomal subunit protein bL19 (163 aa).

A compositionally biased stretch (basic and acidic residues) spans 131 to 150 (ISQERKASGKDQASKPEVRP). Positions 131–163 (ISQERKASGKDQASKPEVRPQGKKPAPKPKAKK) are disordered. Over residues 151–163 (QGKKPAPKPKAKK) the composition is skewed to basic residues.

Belongs to the bacterial ribosomal protein bL19 family.

Its function is as follows. This protein is located at the 30S-50S ribosomal subunit interface and may play a role in the structure and function of the aminoacyl-tRNA binding site. The protein is Large ribosomal subunit protein bL19 of Rhodospirillum rubrum (strain ATCC 11170 / ATH 1.1.1 / DSM 467 / LMG 4362 / NCIMB 8255 / S1).